A 186-amino-acid chain; its full sequence is RNA-free ribonuclease P (186 aa).

The protein belongs to the HARP family.

It catalyses the reaction Endonucleolytic cleavage of RNA, removing 5'-extranucleotides from tRNA precursor.. In terms of biological role, RNA-free RNase P that catalyzes the removal of the 5'-leader sequence from pre-tRNA to produce the mature 5'-terminus. This Hydrogenobaculum sp. (strain Y04AAS1) protein is RNA-free ribonuclease P.